Consider the following 307-residue polypeptide: Olfactory receptor 5AC1 (307 aa).

The Extracellular segment spans residues 1-28 (MAEENKILVTHFVLTGLTDHPGLQAPLF). Residues 29–49 (LVFLVIYLITLVGNLGLMALI) form a helical membrane-spanning segment. Residues 50-56 (WKDPHLH) lie on the Cytoplasmic side of the membrane. Residues 57-77 (TPIYLFLGSLAFADACTSSSV) form a helical membrane-spanning segment. The Extracellular portion of the chain corresponds to 78 to 99 (TSKMLINFLSKNHMLSMAKCAT). C97 and C179 form a disulfide bridge. The helical transmembrane segment at 100–120 (QFYFFGSNATTECFLLVVMAY) threads the bilayer. At 121–143 (DRYVAICNPLLYPVVMSNSLCTQ) the chain is on the cytoplasmic side. Residues 144–164 (FIGISYFIGFLHSAIHVGLLF) traverse the membrane as a helical segment. Residues 165-195 (RLTFCRSNIIHYFYCEILQLFKISCTNPTVN) lie on the Extracellular side of the membrane. Residues 196–216 (ILLIFIFSAFIQVFTFMTLIV) form a helical membrane-spanning segment. Residues 217 to 239 (SYSYILSAILKKKSEKGRSKAFS) lie on the Cytoplasmic side of the membrane. A helical transmembrane segment spans residues 240–260 (TCSAHLLSVSLFYGTLFFMYV). Residues 261-271 (SSRSGSAADQA) are Extracellular-facing. A helical transmembrane segment spans residues 272–292 (KMYSLFYTIIIPLLNPFIYSL). Over 293–307 (RNKEVIDALRRIMKK) the chain is Cytoplasmic.

It belongs to the G-protein coupled receptor 1 family.

Its subcellular location is the cell membrane. Its function is as follows. Odorant receptor. The chain is Olfactory receptor 5AC1 (OR5AC1) from Homo sapiens (Human).